We begin with the raw amino-acid sequence, 153 residues long: MTHDNKLQVEAIKCGTVIDHIPAQVGFKLLSLFKLTETDQRITIGLNLPSGEMGRKDLIKIENTFLTEEQVNQLALYAPQATVNRIDNYDVVGKSRPSLPERINNVLVCPNSNCISHAEPVSSSFAVKKRANDIALKCKYCEKEFSHYVVLAN.

Positions 109, 114, 138, and 141 each coordinate Zn(2+).

It belongs to the PyrI family. As to quaternary structure, contains catalytic and regulatory chains. Requires Zn(2+) as cofactor.

In terms of biological role, involved in allosteric regulation of aspartate carbamoyltransferase. In Salmonella newport (strain SL254), this protein is Aspartate carbamoyltransferase regulatory chain.